Here is a 206-residue protein sequence, read N- to C-terminus: Ubiquitin-conjugating enzyme E2 S (206 aa).

A UBC core domain is found at 14 to 160 (QTIRQVMKEL…ARMMTEIHAQ (147 aa)). Residue C98 is the Glycyl thioester intermediate of the active site. Residues 165 to 191 (GVSDAKDDDGPSNKKHAGLDKKLQDKK) are disordered. The segment covering 168–191 (DAKDDDGPSNKKHAGLDKKLQDKK) has biased composition (basic and acidic residues).

Belongs to the ubiquitin-conjugating enzyme family.

It carries out the reaction S-ubiquitinyl-[E1 ubiquitin-activating enzyme]-L-cysteine + [E2 ubiquitin-conjugating enzyme]-L-cysteine = [E1 ubiquitin-activating enzyme]-L-cysteine + S-ubiquitinyl-[E2 ubiquitin-conjugating enzyme]-L-cysteine.. It participates in protein modification; protein ubiquitination. Functionally, catalyzes the covalent attachment of ubiquitin to other proteins. Acts as an essential factor of the anaphase promoting complex/cyclosome (APC/C), a cell cycle-regulated ubiquitin ligase that controls progression through mitosis. Acts by specifically elongating polyubiquitin chains initiated by the E2 enzyme vih/UbcH10 on APC/C substrates, enhancing the degradation of APC/C substrates by the proteasome and promoting mitotic exit. The chain is Ubiquitin-conjugating enzyme E2 S from Drosophila mojavensis (Fruit fly).